The chain runs to 541 residues: Serine/threonine-protein kinase akt-1 (541 aa).

Residues Asp-15–Lys-118 enclose the PH domain. The 258-residue stretch at Phe-193–Phe-450 folds into the Protein kinase domain. ATP contacts are provided by residues Leu-199–Val-207 and Lys-222. Asp-316 functions as the Proton acceptor in the catalytic mechanism. Phosphothreonine is present on Thr-350. The 78-residue stretch at Arg-451–Ile-528 folds into the AGC-kinase C-terminal domain. At Ser-517 the chain carries Phosphoserine.

This sequence belongs to the protein kinase superfamily. AGC Ser/Thr protein kinase family. RAC subfamily. Interacts with pdk-1, sgk-1, akt-2 and daf-16. Part of a complex containing sgk-1, akt-1 and akt-2. Interacts with cmd-1 in the presence of Ca(2+). Interacts with let-92 phosphatase regulatory subunit pptr-1. Mg(2+) serves as cofactor. Expressed in neurons, muscle cells of the pharynx, rectal gland cells, vulva and spermatheca.

It catalyses the reaction L-seryl-[protein] + ATP = O-phospho-L-seryl-[protein] + ADP + H(+). It carries out the reaction L-threonyl-[protein] + ATP = O-phospho-L-threonyl-[protein] + ADP + H(+). Its activity is regulated as follows. Phosphorylated and activated by pdk-1. In terms of biological role, acts downstream of PI3 kinase age-1 and kinase pdk-1 in the daf-2/insulin receptor-like transduction pathway. Phosphorylates Forkhead-related daf-16 and the longevity-promoting skn-1 transcription factors, which inhibits their entry into the nucleus and antagonizes their functions. Plays a role in maintaining the gonadal basement membrane through it's role in inhibiting daf-16 activity. Has an essential role in regulating developmental arrest at the dauer stage. Plays a role in immune function and pathogen resistance. Regulates salt chemotaxis learning. Downstream of age-1 and together with akt-2 and sgk-1, promotes cell survival during embryonic development. The polypeptide is Serine/threonine-protein kinase akt-1 (Caenorhabditis elegans).